Consider the following 812-residue polypeptide: Mitochondrial intermediate peptidase (812 aa).

A mitochondrion-targeting transit peptide spans 1 to 35 (MLKLLRPRPWVCNSCLNRVAFPKPYPVGSRSTRWL). Residues 518-544 (STSEGGPAFGSPESAANDGMAASRGAS) are disordered. H587 provides a ligand contact to Zn(2+). E588 is an active-site residue. The Zn(2+) site is built by H591 and H594.

It belongs to the peptidase M3 family. It depends on Zn(2+) as a cofactor.

It localises to the mitochondrion matrix. It carries out the reaction Release of an N-terminal octapeptide as second stage of processing of some proteins imported into the mitochondrion.. Cleaves proteins, imported into the mitochondrion, to their mature size. While most mitochondrial precursor proteins are processed to the mature form in one step by mitochondrial processing peptidase (MPP), the sequential cleavage by MIP of an octapeptide after initial processing by MPP is a required step for a subgroup of nuclear-encoded precursor proteins destined for the matrix or the inner membrane. In Pyricularia oryzae (strain 70-15 / ATCC MYA-4617 / FGSC 8958) (Rice blast fungus), this protein is Mitochondrial intermediate peptidase (OCT1).